The sequence spans 1210 residues: Microtubule-associated tumor suppressor 1 homolog (1210 aa).

Disordered regions lie at residues 1–21 (MNDD…IRDK), 370–404 (DPHI…PYEM), 446–482 (VENG…NTTV), 513–545 (QPKD…LTMM), and 585–618 (HSKN…AGSE). Over residues 370-379 (DPHIDSHDND) the composition is skewed to basic and acidic residues. Residues Ser375, Ser380, and Ser393 each carry the phosphoserine modification. A compositionally biased stretch (polar residues) spans 381–398 (DIQSSTEELTLRSVSGQR). The segment covering 446 to 455 (VENGPRDAKR) has biased composition (basic and acidic residues). Residues 473-482 (KSATKTNTTV) show a composition bias toward polar residues. Positions 524-534 (PSPQVTGGSSP) are enriched in low complexity. Positions 585–605 (HSKNASLGVPRTTSATKSNQE) are enriched in polar residues. Phosphoserine is present on Ser621. The disordered stretch occupies residues 683–771 (SKSLLVGSAP…YEEKPPKQAF (89 aa)). The segment covering 692–702 (PKTSTTPGRSS) has biased composition (polar residues). The stretch at 876-1171 (IQHLLSEREE…RLSMENEELL (296 aa)) forms a coiled coil. Phosphoserine is present on residues Ser1143, Ser1164, Ser1185, Ser1195, Ser1199, Ser1201, Ser1203, Ser1204, and Ser1208. A disordered region spans residues 1177 to 1210 (GDLCSPKRSPTSSAIPFQSPRNSGSFSSPSISPR). Positions 1195–1210 (SPRNSGSFSSPSISPR) are enriched in low complexity.

It belongs to the MTUS1 family. In terms of assembly, homodimer. Interacts with AGTR2. Interacts with PTPN6. Ubiquitously expressed, with highest levels in uterus and adrenal gland.

The protein resides in the mitochondrion. It is found in the golgi apparatus. It localises to the cell membrane. Its subcellular location is the nucleus. Its function is as follows. Cooperates with AGTR2 to inhibit ERK2 activation and cell proliferation. May be required for AGTR2 cell surface expression. Together with PTPN6, induces UBE2V2 expression upon angiotensin-II stimulation. The sequence is that of Microtubule-associated tumor suppressor 1 homolog (Mtus1) from Mus musculus (Mouse).